A 223-amino-acid chain; its full sequence is Probable transaldolase (223 aa).

Lysine 92 acts as the Schiff-base intermediate with substrate in catalysis.

This sequence belongs to the transaldolase family. Type 3B subfamily.

The protein resides in the cytoplasm. The catalysed reaction is D-sedoheptulose 7-phosphate + D-glyceraldehyde 3-phosphate = D-erythrose 4-phosphate + beta-D-fructose 6-phosphate. It participates in carbohydrate degradation; pentose phosphate pathway; D-glyceraldehyde 3-phosphate and beta-D-fructose 6-phosphate from D-ribose 5-phosphate and D-xylulose 5-phosphate (non-oxidative stage): step 2/3. Functionally, transaldolase is important for the balance of metabolites in the pentose-phosphate pathway. This is Probable transaldolase from Thermus thermophilus (strain ATCC 27634 / DSM 579 / HB8).